A 406-amino-acid chain; its full sequence is Phosphopentomutase (406 aa).

The Mn(2+) site is built by aspartate 10, aspartate 305, histidine 310, aspartate 346, histidine 347, and histidine 358.

This sequence belongs to the phosphopentomutase family. Mn(2+) is required as a cofactor.

It is found in the cytoplasm. The catalysed reaction is 2-deoxy-alpha-D-ribose 1-phosphate = 2-deoxy-D-ribose 5-phosphate. It catalyses the reaction alpha-D-ribose 1-phosphate = D-ribose 5-phosphate. It participates in carbohydrate degradation; 2-deoxy-D-ribose 1-phosphate degradation; D-glyceraldehyde 3-phosphate and acetaldehyde from 2-deoxy-alpha-D-ribose 1-phosphate: step 1/2. Its function is as follows. Isomerase that catalyzes the conversion of deoxy-ribose 1-phosphate (dRib-1-P) and ribose 1-phosphate (Rib-1-P) to deoxy-ribose 5-phosphate (dRib-5-P) and ribose 5-phosphate (Rib-5-P), respectively. This is Phosphopentomutase from Rhizobium leguminosarum bv. trifolii (strain WSM2304).